Here is a 361-residue protein sequence, read N- to C-terminus: Outer mitochondrial transmembrane helix translocase (361 aa).

Residues 1 to 15 (MVHAETFSRPLSRNE) are Mitochondrial intermembrane-facing. Residues 16 to 32 (VVGLIFRLTIFGAVTYF) form a helical membrane-spanning segment. Topologically, residues 33 to 361 (TIKWMVDAID…QNVLTHVCLD (329 aa)) are cytoplasmic. ATP is bound at residue 133–140 (GPPGCGKT). A Phosphoserine modification is found at S322.

This sequence belongs to the AAA ATPase family. MSP1 subfamily. In terms of assembly, interacts with GRIA2 and GRIP1 in an ATP-dependent manner. ATAD1-catalyzed ATP hydrolysis disrupts not only its binding to GRIA2 and GRIP1, but also interaction between GRIP1 and GRIA2, leading to AMPAR complex disassembly.

It localises to the mitochondrion outer membrane. The protein resides in the peroxisome membrane. Its subcellular location is the postsynaptic cell membrane. It carries out the reaction [protein]-with a C-terminal TM segment(out) + ATP + H2O = [protein]-with a C-terminal TM segment(in) + ADP + phosphate + H(+). Functionally, outer mitochondrial translocase required to remove mislocalized tail-anchored transmembrane proteins on mitochondria. Specifically recognizes and binds tail-anchored transmembrane proteins: acts as a dislocase that mediates the ATP-dependent extraction of mistargeted tail-anchored transmembrane proteins from the mitochondrion outer membrane. Also plays a critical role in regulating the surface expression of AMPA receptors (AMPAR), thereby regulating synaptic plasticity and learning and memory. Required for NMDA-stimulated AMPAR internalization and inhibition of GRIA1 and GRIA2 recycling back to the plasma membrane; these activities are ATPase-dependent. The polypeptide is Outer mitochondrial transmembrane helix translocase (Bos taurus (Bovine)).